Reading from the N-terminus, the 155-residue chain is NADPH-dependent 7-cyano-7-deazaguanine reductase (155 aa).

Cys-53 functions as the Thioimide intermediate in the catalytic mechanism. The active-site Proton donor is Asp-60. Substrate contacts are provided by residues Val-75–Ser-77 and His-94–Glu-95.

This sequence belongs to the GTP cyclohydrolase I family. QueF type 1 subfamily.

It localises to the cytoplasm. The enzyme catalyses 7-aminomethyl-7-carbaguanine + 2 NADP(+) = 7-cyano-7-deazaguanine + 2 NADPH + 3 H(+). The protein operates within tRNA modification; tRNA-queuosine biosynthesis. Catalyzes the NADPH-dependent reduction of 7-cyano-7-deazaguanine (preQ0) to 7-aminomethyl-7-deazaguanine (preQ1). The polypeptide is NADPH-dependent 7-cyano-7-deazaguanine reductase (Brucella anthropi (strain ATCC 49188 / DSM 6882 / CCUG 24695 / JCM 21032 / LMG 3331 / NBRC 15819 / NCTC 12168 / Alc 37) (Ochrobactrum anthropi)).